The following is a 267-amino-acid chain: Transcription factor Spi-B (267 aa).

Residues 1 to 31 are TAD1 (Acidic); it reads MLALEAAQLDGPHLSCLYPEGVFYDLDSCKP. The TAD2 stretch occupies residues 41-62; the sequence is LDSTWGWTEAPPAPAIAPYEAF. The segment at residues 174–257 is a DNA-binding region (ETS); it reads LRLYQFLLGL…VKRKLTYQFD (84 aa).

Belongs to the ETS family. Can form homotypic interactions. Interacts with IRF4/Pip. Interacts with JUN. Interacts with TBP. May also interact with CREBBP and EP300. Interacts with NONO/p54(nrb). Expressed in the medulla of the thymus, the spleen and germinal centers of the lymph nodes. Expressed in B-cells and T-cells, expression increases during B-cell maturation and decreases during T-cell maturation.

The protein resides in the nucleus. Sequence specific transcriptional activator which binds to the PU-box, a purine-rich DNA sequence (5'-GAGGAA-3') that can act as a lymphoid-specific enhancer. Promotes development of plasmacytoid dendritic cells (pDCs), also known as type 2 DC precursors (pre-DC2) or natural interferon (IFN)-producing cells. These cells have the capacity to produce large amounts of interferon and block viral replication. Required for B-cell receptor (BCR) signaling, which is necessary for normal B-cell development and antigenic stimulation. In Mus musculus (Mouse), this protein is Transcription factor Spi-B (Spib).